A 449-amino-acid polypeptide reads, in one-letter code: Serine--tRNA ligase (449 aa).

256 to 258 (TSE) is a binding site for L-serine. 287–289 (RAE) provides a ligand contact to ATP. E310 serves as a coordination point for L-serine. 374-377 (EISS) contacts ATP. S410 contributes to the L-serine binding site.

This sequence belongs to the class-II aminoacyl-tRNA synthetase family. Type-1 seryl-tRNA synthetase subfamily. In terms of assembly, homodimer. The tRNA molecule binds across the dimer.

Its subcellular location is the cytoplasm. The catalysed reaction is tRNA(Ser) + L-serine + ATP = L-seryl-tRNA(Ser) + AMP + diphosphate + H(+). It carries out the reaction tRNA(Sec) + L-serine + ATP = L-seryl-tRNA(Sec) + AMP + diphosphate + H(+). The protein operates within aminoacyl-tRNA biosynthesis; selenocysteinyl-tRNA(Sec) biosynthesis; L-seryl-tRNA(Sec) from L-serine and tRNA(Sec): step 1/1. Catalyzes the attachment of serine to tRNA(Ser). Is also able to aminoacylate tRNA(Sec) with serine, to form the misacylated tRNA L-seryl-tRNA(Sec), which will be further converted into selenocysteinyl-tRNA(Sec). The protein is Serine--tRNA ligase of Xanthomonas oryzae pv. oryzae (strain MAFF 311018).